Here is a 348-residue protein sequence, read N- to C-terminus: Dihydroorotase (348 aa).

Zn(2+) is bound by residues histidine 17 and histidine 19. Substrate is bound by residues 19-21 (HLR) and asparagine 45. Lysine 103, histidine 140, and histidine 178 together coordinate Zn(2+). Lysine 103 carries the N6-carboxylysine modification. A substrate-binding site is contributed by histidine 140. Leucine 223 is a binding site for substrate. Residue aspartate 251 participates in Zn(2+) binding. Aspartate 251 is a catalytic residue. Positions 255 and 267 each coordinate substrate.

The protein belongs to the metallo-dependent hydrolases superfamily. DHOase family. Class II DHOase subfamily. In terms of assembly, homodimer. Zn(2+) is required as a cofactor.

The catalysed reaction is (S)-dihydroorotate + H2O = N-carbamoyl-L-aspartate + H(+). Its pathway is pyrimidine metabolism; UMP biosynthesis via de novo pathway; (S)-dihydroorotate from bicarbonate: step 3/3. Functionally, catalyzes the reversible cyclization of carbamoyl aspartate to dihydroorotate. In Escherichia coli O6:H1 (strain CFT073 / ATCC 700928 / UPEC), this protein is Dihydroorotase.